We begin with the raw amino-acid sequence, 170 residues long: Myosin regulatory light chain 1 (170 aa).

Residues M1–R13 show a composition bias toward basic residues. Positions M1–D22 are disordered. 2 EF-hand domains span residues K24 to I59 and D93 to E128. The Ca(2+) site is built by D37, N39, D41, and D48.

Myosin is a hexamer of 2 heavy chains and 4 light chains (two regulatory light chains and two essential light chains).

The chain is Myosin regulatory light chain 1 (mlc-1) from Caenorhabditis elegans.